The following is a 215-amino-acid chain: S-crystallin 4 (215 aa).

One can recognise a GST N-terminal domain in the interval 2–80 (PSYTLHYFNH…YLAREFGFHG (79 aa)). The 134-residue stretch at 82–215 (NNMDMARVDY…YLQKRSRTEF (134 aa)) folds into the GST C-terminal domain.

Belongs to the GST superfamily. Lens.

Its function is as follows. S-crystallins are structural components of squids and octopi eye lens. Contains relatively little if any GST activity. This Enteroctopus dofleini (North Pacific giant octopus) protein is S-crystallin 4.